Here is a 179-residue protein sequence, read N- to C-terminus: Replication restart protein DnaT (179 aa).

Residues 155–179 (NGGLPKRDVNTVSEPDSQIPPGFRG) are disordered.

The protein belongs to the DnaT family. As to quaternary structure, homooligomerizes. Interacts with PriB. Component of the replication restart primosome. Primosome assembly occurs via a 'hand-off' mechanism. PriA binds to replication forks, subsequently PriB then DnaT bind; DnaT then displaces ssDNA to generate the helicase loading substrate.

Its function is as follows. Involved in the restart of stalled replication forks, which reloads the replicative helicase on sites other than the origin of replication. Can function in multiple replication restart pathways. Displaces ssDNA from a PriB-ssDNA complex. Probably forms a spiral filament on ssDNA. This is Replication restart protein DnaT from Escherichia coli O8 (strain IAI1).